The sequence spans 366 residues: RISC-loading complex subunit TARBP2 (366 aa).

Sufficient for interaction with PRKRA regions lie at residues Met-22 to Leu-105, Ser-152 to Asp-234, and Leu-287 to Lys-366. Residues Thr-30 to Gly-97 enclose the DRBM 1 domain. Phosphoserine is present on Ser-152. 2 DRBM domains span residues Asn-159 to Thr-227 and Ala-293 to Ile-361. A sufficient for interaction with DICER1 region spans residues Val-228–Lys-366.

The protein belongs to the TARBP2 family. As to quaternary structure, self-associates. Component of the RISC loading complex (RLC), or micro-RNA (miRNA) loading complex (miRLC), which is composed of DICER1, AGO2 and TARBP2. Note that the trimeric RLC/miRLC is also referred to as RISC. Interacts with EIF2AK2/PKR and inhibits its protein kinase activity. Interacts with DHX9 and PRKRA. Interacts with DICER1, AGO2, MOV10, EIF6 and RPL7A (60S ribosome subunit); they form a large RNA-induced silencing complex (RISC). Interacts with IRF7; this interaction prevents IRF7 phosphorylation and activation. In terms of assembly, (Microbial infection) Interacts with FTSJ3; forms a complex with FTSJ3 and HIV-1 TAR RNA. (Microbial infection) Interacts with ebolavirus VP30; this interaction, which occurs only in the presence of siRNA, prevents TARBP2 binding to DICER1 and thus allows the virus to counteract host RNA silencing. As to quaternary structure, (Microbial infection) Interacts with ebolavirus VP35; this interaction prevents TARBP2 binding to DICER1 and thus allows the virus to counteract host RNA silencing.

Its subcellular location is the cytoplasm. The protein localises to the perinuclear region. The protein resides in the nucleus. Required for formation of the RNA induced silencing complex (RISC). Component of the RISC loading complex (RLC), also known as the micro-RNA (miRNA) loading complex (miRLC), which is composed of DICER1, AGO2 and TARBP2. Within the RLC/miRLC, DICER1 and TARBP2 are required to process precursor miRNAs (pre-miRNAs) to mature miRNAs and then load them onto AGO2. AGO2 bound to the mature miRNA constitutes the minimal RISC and may subsequently dissociate from DICER1 and TARBP2. May also play a role in the production of short interfering RNAs (siRNAs) from double-stranded RNA (dsRNA) by DICER1. Binds in vitro to the PRM1 3'-UTR. Seems to act as a repressor of translation. For some pre-miRNA substrates, may also alter the choice of cleavage site by DICER1. Negatively regulates IRF7-mediated IFN-beta signaling triggered by viral infection by inhibiting the phosphorylation of IRF7 and promoting its 'Lys'-48-linked ubiquitination and degradation. In terms of biological role, (Microbial infection) Binds to the HIV-1 TAR RNA which is located in the long terminal repeat (LTR) of HIV-1, and stimulates translation of TAR-containing RNAs. This is achieved in part at least by binding to and inhibiting EIF2AK2/PKR, thereby reducing phosphorylation and inhibition of EIF2S1/eIF-2-alpha. May also promote translation of TAR-containing RNAs independently of EIF2AK2/PKR. Mediates recruitment of FTSJ3 methyltransferase to HIV-1 RNA, leading to 2'-O-methylation of the viral genome, allowing HIV-1 to escape the innate immune system. The polypeptide is RISC-loading complex subunit TARBP2 (Homo sapiens (Human)).